Reading from the N-terminus, the 488-residue chain is L-amino oxidase (488 aa).

FAD is bound by residues 60-61 (MS), 80-81 (EA), arginine 88, and 104-107 (GPMR). Substrate is bound by residues arginine 107 and tyrosine 388. Residues cysteine 347 and cysteine 428 are joined by a disulfide bond. Residues glutamate 474 and 481–486 (GWIDST) contribute to the FAD site. 481–482 (GW) lines the substrate pocket.

Belongs to the flavin monoamine oxidase family. FIG1 subfamily. Monomer. This is in contrast with most of its orthologs, that are non-covalently linked homodimers. The cofactor is FAD. Post-translationally, N-glycosylated. In terms of tissue distribution, expressed by the venom gland.

Its subcellular location is the secreted. It catalyses the reaction an L-alpha-amino acid + O2 + H2O = a 2-oxocarboxylate + H2O2 + NH4(+). It carries out the reaction L-leucine + O2 + H2O = 4-methyl-2-oxopentanoate + H2O2 + NH4(+). Its function is as follows. Catalyzes an oxidative deamination of predominantly hydrophobic and aromatic L-amino acids, thus producing hydrogen peroxide that may contribute to the diverse toxic effects of this enzyme. Shows activity on L-Leu. Exhibits diverse biological activities, such as hemorrhage, hemolysis, edema, antibacterial and antiparasitic activities, as well as regulation of platelet aggregation. When tested on SW480 and SW620 human colon cancer cells, shows inhibition of cell proliferation, and induction of apoptosis, which is probably a consequence of the increased caspase-3 activity and the decreased Bcl-2 expression. This is L-amino oxidase from Trimeresurus purpureomaculatus (Mangrove pit viper).